We begin with the raw amino-acid sequence, 1616 residues long: MISARSAEALTAQAGRLMAHVQANPGLDPIDVGCSLASRSVFEHRAVVVGASREQLIAGLAGLAAGEPGAGVAVGQPGSVGKTVVVFPGQGAQRIGMGRELYGELPVFAQAFDAVADELDRHLRLPLRDVIWGADADLLDSTEFAQPALFAVEVASFAVLRDWGVLPDFVMGHSVGELAAAHAAGVLTLADAAMLVVARGRLMQALPAGGAMVAVAASEDEVEPLLGEGVGIAAINAPESVVISGAQAAANAIADRFAAQGRRVHQLAVSHAFHSPLMEPMLEEFARVAARVQAREPQLGLVSNVTGELAGPDFGSAQYWVDHVRRPVRFADSARHLQTLGATHFIEAGPGSGLTGSIEQSLAPAEAMVVSMLGKDRPELASALGAAGQVFTTGVPVQWSAVFAGSGGRRVQLPTYAFQRRRFWETPGADGPADAAGLGLGATEHALLGAVVERPDSDEVVLTGRLSLADQPWLADHVVNGVVLFPGAGFVELVIRAGDEVGCALIEELVLAAPLVMHPGVGVQVQVVVGAADESGHRAVSVYSRGDQSQGWLLNAEGMLGVAAAETPMDLSVWPPEGAESVDISDGYAQLAERGYAYGPAFQGLVAIWRRGSELFAEVVAPGEAGVAVDRMGMHPAVLDAVLHALGLAVEKTQASTETRLPFCWRGVSLHAGGAGRVRARFASAGADAISVDVCDATGLPVLTVRSLVTRPITAEQLRAAVTAAGGASDQGPLEVVWSPISVVSGGANGSAPPAPVSWADFCAGSDGDASVVVWELESAGGQASSVVGSVYAATHTALEVLQSWLGADRAATLVVLTHGGVGLAGEDISDLAAAAVWGMARSAQAENPGRIVLIDTDAAVDASVLAGVGEPQLLVRGGTVHAPRLSPAPALLALPAAESAWRLAAGGGGTLEDLVIQPCPEVQAPLQAGQVRVAVAAVGVNFRDVVAALGMYPGQAPPLGAEGAGVVLETGPEVTDLAVGDAVMGFLGGAGPLAVVDQQLVTRVPQGWSFAQAAAVPVVFLTAWYGLADLAEIKAGESVLIHAGTGGVGMAAVQLARQWGVEVFVTASRGKWDTLRAMGFDDDHIGDSRTCEFEEKFLAVTEGRGVDVVLDSLAGEFVDASLRLLVRGGRFLEMGKTDIRDAQEIAANYPGVQYRAFDLSEAGPARMQEMLAEVRELFDTRELHRLPVTTWDVRCAPAAFRFMSQARHIGKVVLTMPSALADRLADGTVVITGATGAVGGVLARHLVGAYGVRHLVLASRRGDRAEGAAELAADLTEAGAKVQVVACDVADRAAVAGLFAQLSREYPPVRGVIHAAGVLDDAVITSLTPDRIDTVLRAKVDAAWNLHQATSDLDLSMFALCSSIAATVGSPGQGNYSAANAFLDGLAAHRQAAGLAGISLAWGLWEQPGGMTAHLSSRDLARMSRSGLAPMSPAEAVELFDAALAIDHPLAVATLLDRAALDARAQAGALPALFSGLARRPRRRQIDDTGDATSSKSALAQRLHGLAADEQLELLVGLVCLQAAAVLGRPSAEDVDPDTEFGDLGFDSLTAVELRNRLKTATGLTLPPTVIFDHPTPTAVAEYVAQQMSGSRPTESGDPTSQVVEPAAAEVSVHA.

Residues 83-397 (TVVVFPGQGA…GQVFTTGVPV (315 aa)) form an acyltransferase region. The active-site For acyltransferase activity is the Ser-174. The tract at residues 445–567 (HALLGAVVER…GMLGVAAAET (123 aa)) is N-terminal hotdog fold. A dehydratase region spans residues 445 to 605 (HALLGAVVER…YAYGPAFQGL (161 aa)). The 275-residue stretch at 445–719 (HALLGAVVER…TRPITAEQLR (275 aa)) folds into the PKS/mFAS DH domain. Catalysis depends on His-477, which acts as the Proton acceptor; for dehydratase activity. The tract at residues 579 to 719 (AESVDISDGY…TRPITAEQLR (141 aa)) is C-terminal hotdog fold. The active-site Proton donor; for dehydratase activity is Asp-640. The enoylreductase stretch occupies residues 910 to 1215 (GTLEDLVIQP…QARHIGKVVL (306 aa)). Residues 1040–1057 (VLIH…VQLA) and 1229–1244 (TVVI…GVLA) contribute to the NADP(+) site. The tract at residues 1228-1409 (GTVVITGATG…SLAWGLWEQP (182 aa)) is beta-ketoacyl reductase. Residues 1514-1589 (ELLVGLVCLQ…AVAEYVAQQM (76 aa)) form the Carrier domain. Position 1549 is an O-(pantetheine 4'-phosphoryl)serine (Ser-1549). A compositionally biased stretch (polar residues) spans 1588-1604 (QMSGSRPTESGDPTSQV). The tract at residues 1588–1616 (QMSGSRPTESGDPTSQVVEPAAAEVSVHA) is disordered.

The cofactor is pantetheine 4'-phosphate.

It participates in lipid metabolism; fatty acid biosynthesis. In terms of biological role, may play a role in phthiocerol biosynthesis. This chain is Putative inactive phenolphthiocerol synthesis polyketide synthase type I Pks1 (pks1), found in Mycobacterium tuberculosis (strain ATCC 25618 / H37Rv).